A 232-amino-acid chain; its full sequence is NAD(P)H-hydrate epimerase (232 aa).

Residues Ala-9–Leu-219 form the YjeF N-terminal domain. Asn-62–Asp-66 is a (6S)-NADPHX binding site. K(+)-binding residues include Asn-63 and Asp-127. (6S)-NADPHX-binding positions include Gly-131–Pro-137 and Asp-160. Ser-163 provides a ligand contact to K(+).

The protein belongs to the NnrE/AIBP family. It depends on K(+) as a cofactor.

The enzyme catalyses (6R)-NADHX = (6S)-NADHX. The catalysed reaction is (6R)-NADPHX = (6S)-NADPHX. Its function is as follows. Catalyzes the epimerization of the S- and R-forms of NAD(P)HX, a damaged form of NAD(P)H that is a result of enzymatic or heat-dependent hydration. This is a prerequisite for the S-specific NAD(P)H-hydrate dehydratase to allow the repair of both epimers of NAD(P)HX. This chain is NAD(P)H-hydrate epimerase, found in Aedes aegypti (Yellowfever mosquito).